Reading from the N-terminus, the 290-residue chain is MANPKLLGMGLSEAEAIGADSARFEELLLQASKELQQAQTTRPESTQIQPQPGFCIKTNSSEGKVFINICHSPSIPPPADVTEEELLQMLEEDQAGFRIPMSLGEPHAELDAKGQGCTAYDVAVNSDFYRRMQNSDFLRELVITIAREGLEDKYNLQLNPEWRMMKNRPFMGSISQQNIRSEQRPRIQELGDLYTPAPGRAESGPEKPHLNLWLEAPDLLLAEVDLPKLDGALGLSLEIGENRLVMGGPQQLYHLDAYIPLQINSHESKAAFHRKRKQLMVAMPLLPVPS.

2 positions are modified to phosphoserine: S12 and S173.

Belongs to the PIH1 family. As to quaternary structure, component of the R2TP complex composed at least of RUVBL1, RUVBL2, RPAP3 and PIHD1. Component of the PAQosome complex which is responsible for the biogenesis of several protein complexes and which consists of R2TP complex members RUVBL1, RUVBL2, RPAP3 and PIH1D1, URI complex members PFDN2, PFDN6, PDRG1, UXT and URI1 as well as ASDURF, POLR2E and DNAAF10/WDR92. Interacts with phosphorylated TELO2 and mediates interaction of TELO2 with the R2TP complex. Interacts with phosphorylated ECD, EFTUD2/SNRP116, RPB1 and UBR5 and with RPB1 in a phosphorylation-independent manner. Interacts with the core C/D box snoRNP particle components NOP58 and FBL and with RUVBL1/TIP49. Interacts with RPAP3 and DNAAF10. Interacts with histone H4 and with SWI/SNF complex member SMARCB1/SNF5. Interacts with the mTORC1 complex member RPTOR. Interacts with MSL1. Expressed at low levels in normal mammary epithelial cells (at protein level). Highest expression in lung, leukocyte and placenta. Expressed at lower levels in brain, prostate, colon, heart, small intestine, liver, ovary, pancreas, skeletal muscle, spleen, testis and thymus.

The protein localises to the nucleus. Involved in the assembly of C/D box small nucleolar ribonucleoprotein (snoRNP) particles. Recruits the SWI/SNF complex to the core promoter of rRNA genes and enhances pre-rRNA transcription. Mediates interaction of TELO2 with the R2TP complex which is necessary for the stability of MTOR and SMG1. Positively regulates the assembly and activity of the mTORC1 complex. The polypeptide is PIH1 domain-containing protein 1 (PIH1D1) (Homo sapiens (Human)).